Reading from the N-terminus, the 86-residue chain is Small ribosomal subunit protein uS15 (86 aa).

Belongs to the universal ribosomal protein uS15 family. As to quaternary structure, part of the 30S ribosomal subunit. Forms a bridge to the 50S subunit in the 70S ribosome, contacting the 23S rRNA.

In terms of biological role, one of the primary rRNA binding proteins, it binds directly to 16S rRNA where it helps nucleate assembly of the platform of the 30S subunit by binding and bridging several RNA helices of the 16S rRNA. Functionally, forms an intersubunit bridge (bridge B4) with the 23S rRNA of the 50S subunit in the ribosome. The chain is Small ribosomal subunit protein uS15 from Mycoplasma pneumoniae (strain ATCC 29342 / M129 / Subtype 1) (Mycoplasmoides pneumoniae).